The sequence spans 543 residues: Tubby-related protein 1 (543 aa).

Residues 1-290 (MPLQEETLRE…RASSPPVEVG (290 aa)) are disordered. Composition is skewed to basic and acidic residues over residues 46 to 56 (PETPDSLESKP) and 86 to 99 (FLRDPEAKKRDPRE). Composition is skewed to acidic residues over residues 110–132 (GGEENSEEDSDDDDNDDDEEEEE) and 244–255 (KKEEEEEVEEEV). Basic residues predominate over residues 267–276 (GRAKGKGKKK).

Belongs to the TUB family. In terms of assembly, homodimer. May interact with ABCF1, PSIP1, ZEB1 and HMGB2 (Potential). Interacts with F-actin. Interacts with DNM1. Interacts with TUB. Interacts with TYRO3. Retina specific. Detected in the outer plexiform layer in photoreceptor cells (at protein level).

It localises to the cytoplasm. Its subcellular location is the cell membrane. The protein resides in the secreted. It is found in the synapse. Its function is as follows. Required for normal development of photoreceptor synapses. Required for normal photoreceptor function and for long-term survival of photoreceptor cells. Interacts with cytoskeleton proteins and may play a role in protein transport in photoreceptor cells. Binds lipids, especially phosphatidylinositol 3-phosphate, phosphatidylinositol 4-phosphate, phosphatidylinositol 5-phosphate, phosphatidylinositol 3,4-bisphosphate, phosphatidylinositol 4,5-bisphosphate, phosphatidylinositol 3,4,5-bisphosphate, phosphatidylserine and phosphatidic acid (in vitro). Contribute to stimulation of phagocytosis of apoptotic retinal pigment epithelium (RPE) cells and macrophages. The sequence is that of Tubby-related protein 1 (Tulp1) from Mus musculus (Mouse).